The primary structure comprises 825 residues: Glycerol-3-phosphate acyltransferase (825 aa).

The HXXXXD motif motif lies at 304-309; sequence CHRSHM. Positions 803–825 are disordered; the sequence is MPAETSNQPEAPETPEPEGKTES.

It belongs to the GPAT/DAPAT family.

It is found in the cell inner membrane. It carries out the reaction sn-glycerol 3-phosphate + an acyl-CoA = a 1-acyl-sn-glycero-3-phosphate + CoA. It functions in the pathway phospholipid metabolism; CDP-diacylglycerol biosynthesis; CDP-diacylglycerol from sn-glycerol 3-phosphate: step 1/3. In Yersinia pseudotuberculosis serotype O:1b (strain IP 31758), this protein is Glycerol-3-phosphate acyltransferase.